We begin with the raw amino-acid sequence, 391 residues long: MKTVREIEFNSKTVLVRVDYNLPMDENGNIADDNRIRATLPLVNYLVDKGAKIVLASHMGRPKGKPAASLSLAPAAKRLSELLGFEVVFVDDCIGPKVKERVDQLEPGQIILLENLRFYKGEEENDPEFARSLAELCQVYVNDAFAVSHRTAASIVAITRFVREACAGFLLEKEVKCFHDSIENPVHPLVAIIGGAKVSSKLGALENMLNHVDALVIGGAMANTFLKSQGNDVGASMVEEDLVETAAHIVQEARDRKINLILPVDLVVADRFDADAQTRVVDVKAVPQGWMALDIGPETGAIFARAIQRAATIVWNGPMGVFEMKPFCNGTKMVAAAVAAADAFSVVGGGDTGLAVNLCGVADKMSYVSTGGGAFLHLMEGKKLPGVTALD.

Residues 19 to 21, Arg-35, 58 to 61, Arg-117, and Arg-150 contribute to the substrate site; these read DYN and HMGR. Residues Lys-201, Glu-323, and 349–352 contribute to the ATP site; that span reads GGDT.

The protein belongs to the phosphoglycerate kinase family. Monomer.

The protein localises to the cytoplasm. The enzyme catalyses (2R)-3-phosphoglycerate + ATP = (2R)-3-phospho-glyceroyl phosphate + ADP. The protein operates within carbohydrate degradation; glycolysis; pyruvate from D-glyceraldehyde 3-phosphate: step 2/5. This Desulforapulum autotrophicum (strain ATCC 43914 / DSM 3382 / VKM B-1955 / HRM2) (Desulfobacterium autotrophicum) protein is Phosphoglycerate kinase.